Reading from the N-terminus, the 384-residue chain is N-acetyldiaminopimelate deacetylase (384 aa).

Residue Asp-73 is part of the active site. Glu-132 acts as the Proton acceptor in catalysis.

The protein belongs to the peptidase M20A family. N-acetyldiaminopimelate deacetylase subfamily.

It catalyses the reaction N-acetyl-(2S,6S)-2,6-diaminopimelate + H2O = (2S,6S)-2,6-diaminopimelate + acetate. It functions in the pathway amino-acid biosynthesis; L-lysine biosynthesis via DAP pathway; LL-2,6-diaminopimelate from (S)-tetrahydrodipicolinate (acetylase route): step 3/3. In terms of biological role, catalyzes the conversion of N-acetyl-diaminopimelate to diaminopimelate and acetate. The polypeptide is N-acetyldiaminopimelate deacetylase (Limosilactobacillus fermentum (strain NBRC 3956 / LMG 18251) (Lactobacillus fermentum)).